A 70-amino-acid chain; its full sequence is MIFKVFYQEKMTEVPVRENTKVLYLEATSEKDVRTKLNKFAYNIEFVQSVTGNHLEYEKANADLTLAEIV.

The protein belongs to the RNA polymerase subunit epsilon family. RNAP is composed of a core of 2 alpha, a beta and a beta' subunit. The core is associated with a delta subunit, and at least one of epsilon or omega. When a sigma factor is associated with the core the holoenzyme is formed, which can initiate transcription.

It carries out the reaction RNA(n) + a ribonucleoside 5'-triphosphate = RNA(n+1) + diphosphate. Its function is as follows. A non-essential component of RNA polymerase (RNAP). This Bacillus cereus (strain ZK / E33L) protein is DNA-directed RNA polymerase subunit epsilon.